A 120-amino-acid polypeptide reads, in one-letter code: Small ribosomal subunit protein uS11 (120 aa).

The protein belongs to the universal ribosomal protein uS11 family. As to quaternary structure, part of the 30S ribosomal subunit. Interacts with proteins S7 and S18. Binds to IF-3.

In terms of biological role, located on the platform of the 30S subunit, it bridges several disparate RNA helices of the 16S rRNA. Forms part of the Shine-Dalgarno cleft in the 70S ribosome. In Neorickettsia sennetsu (strain ATCC VR-367 / Miyayama) (Ehrlichia sennetsu), this protein is Small ribosomal subunit protein uS11.